The following is a 426-amino-acid chain: Glutamate-1-semialdehyde 2,1-aminomutase (426 aa).

Residue lysine 265 is modified to N6-(pyridoxal phosphate)lysine.

It belongs to the class-III pyridoxal-phosphate-dependent aminotransferase family. HemL subfamily. Homodimer. The cofactor is pyridoxal 5'-phosphate.

The protein resides in the cytoplasm. The enzyme catalyses (S)-4-amino-5-oxopentanoate = 5-aminolevulinate. It functions in the pathway porphyrin-containing compound metabolism; protoporphyrin-IX biosynthesis; 5-aminolevulinate from L-glutamyl-tRNA(Glu): step 2/2. The protein is Glutamate-1-semialdehyde 2,1-aminomutase of Shigella boydii serotype 4 (strain Sb227).